The primary structure comprises 401 residues: Acetate kinase (401 aa).

Asn7 provides a ligand contact to Mg(2+). Residue Lys14 participates in ATP binding. Position 91 (Arg91) interacts with substrate. The Proton donor/acceptor role is filled by Asp148. ATP is bound by residues His208–Gly212, Asp283–Arg285, and Gly332–Asn336. A Mg(2+)-binding site is contributed by Glu385.

Belongs to the acetokinase family. In terms of assembly, homodimer. Mg(2+) serves as cofactor. Requires Mn(2+) as cofactor.

It is found in the cytoplasm. The catalysed reaction is acetate + ATP = acetyl phosphate + ADP. It participates in metabolic intermediate biosynthesis; acetyl-CoA biosynthesis; acetyl-CoA from acetate: step 1/2. Its function is as follows. Catalyzes the formation of acetyl phosphate from acetate and ATP. Can also catalyze the reverse reaction. The chain is Acetate kinase from Caldanaerobacter subterraneus subsp. tengcongensis (strain DSM 15242 / JCM 11007 / NBRC 100824 / MB4) (Thermoanaerobacter tengcongensis).